Consider the following 267-residue polypeptide: Diphthine synthase (267 aa).

S-adenosyl-L-methionine contacts are provided by residues leucine 9, aspartate 85, valine 88, 113 to 114 (SI), leucine 170, alanine 211, and histidine 236.

Belongs to the diphthine synthase family. In terms of assembly, homodimer.

The enzyme catalyses 2-[(3S)-amino-3-carboxypropyl]-L-histidyl-[translation elongation factor 2] + 3 S-adenosyl-L-methionine = diphthine-[translation elongation factor 2] + 3 S-adenosyl-L-homocysteine + 3 H(+). Its pathway is protein modification; peptidyl-diphthamide biosynthesis. S-adenosyl-L-methionine-dependent methyltransferase that catalyzes the trimethylation of the amino group of the modified target histidine residue in translation elongation factor 2 (EF-2), to form an intermediate called diphthine. The three successive methylation reactions represent the second step of diphthamide biosynthesis. The protein is Diphthine synthase of Methanococcoides burtonii (strain DSM 6242 / NBRC 107633 / OCM 468 / ACE-M).